We begin with the raw amino-acid sequence, 250 residues long: Vacuolar protein sorting-associated protein 22 homolog 1 (250 aa).

Positions 35–55 form a coiled coil; sequence MKEQLSTFRSQLEEFARKHKN.

Belongs to the SNF8 family. As to quaternary structure, component of the endosomal sorting complex required for transport II (ESCRT-II), composed of VPS22, VPS25 and VPS36.

It is found in the endosome. Its function is as follows. Component of the endosomal sorting complex required for transport II (ESCRT-II), which is required for multivesicular body (MVB) formation and sorting of endosomal cargo proteins into MVBs. The ESCRT-II complex is probably involved in the recruitment of the ESCRT-III complex. The sequence is that of Vacuolar protein sorting-associated protein 22 homolog 1 (VP22-1) from Arabidopsis thaliana (Mouse-ear cress).